The primary structure comprises 118 residues: Thioredoxin H-type (118 aa).

Residues 2–114 (AAEEGQVIGC…LQQTIAKHMA (113 aa)) enclose the Thioredoxin domain. Catalysis depends on nucleophile residues cysteine 40 and cysteine 43. A disulfide bridge links cysteine 40 with cysteine 43.

The protein belongs to the thioredoxin family. Plant H-type subfamily.

Its subcellular location is the cytoplasm. In terms of biological role, participates in various redox reactions through the reversible oxidation of the active center dithiol to a disulfide. The H form is known to activate a number of cytosolic enzymes. The chain is Thioredoxin H-type from Ricinus communis (Castor bean).